The sequence spans 269 residues: Ribosomal RNA small subunit methyltransferase A (269 aa).

Residues Ile17, Gly42, Glu64, Asp89, and Asn109 each coordinate S-adenosyl-L-methionine.

This sequence belongs to the class I-like SAM-binding methyltransferase superfamily. rRNA adenine N(6)-methyltransferase family. RsmA subfamily.

Its subcellular location is the cytoplasm. It carries out the reaction adenosine(1518)/adenosine(1519) in 16S rRNA + 4 S-adenosyl-L-methionine = N(6)-dimethyladenosine(1518)/N(6)-dimethyladenosine(1519) in 16S rRNA + 4 S-adenosyl-L-homocysteine + 4 H(+). In terms of biological role, specifically dimethylates two adjacent adenosines (A1518 and A1519) in the loop of a conserved hairpin near the 3'-end of 16S rRNA in the 30S particle. May play a critical role in biogenesis of 30S subunits. This chain is Ribosomal RNA small subunit methyltransferase A, found in Anaplasma phagocytophilum (strain HZ).